A 1765-amino-acid chain; its full sequence is Sodium channel protein type 11 subunit alpha (1765 aa).

The Cytoplasmic segment spans residues Met-1 to Ser-126. One copy of the I repeat lies at Phe-115–Arg-403. A helical membrane pass occupies residues Val-127–Asn-148. Residues Ser-149–Asp-157 are Extracellular-facing. Residues Ile-158–Ala-177 form a helical membrane-spanning segment. At Arg-178 to Arg-189 the chain is on the cytoplasmic side. Residues Asp-190–Pro-209 traverse the membrane as a helical segment. Over Gly-210–Ser-216 the chain is Extracellular. Residue Asn-214 is glycosylated (N-linked (GlcNAc...) asparagine). The chain crosses the membrane as a helical; Voltage-sensor span at residues Ala-217–Leu-236. The Cytoplasmic portion of the chain corresponds to Lys-237–Asp-252. The chain crosses the membrane as a helical span at residues Val-253–Leu-266. Residues Val-267–Asn-339 lie on the Extracellular side of the membrane. Cysteines 280 and 317 form a disulfide. Asn-319 and Asn-333 each carry an N-linked (GlcNAc...) asparagine glycan. An intramembrane region (pore-forming) is located at residues Phe-340–Leu-364. At Arg-365–Phe-371 the chain is on the extracellular side. A helical membrane pass occupies residues Val-372–Ala-397. Residues Tyr-398–Thr-567 lie on the Cytoplasmic side of the membrane. One copy of the II repeat lies at Cys-554–Gln-820. A helical membrane pass occupies residues Ile-568 to Val-591. Topologically, residues Glu-592 to Thr-602 are extracellular. A helical transmembrane segment spans residues Ile-603–Leu-626. At Asp-627 to His-634 the chain is on the cytoplasmic side. Residues Gly-635–Leu-656 traverse the membrane as a helical segment. Topologically, residues Ser-657–Ser-662 are extracellular. N-linked (GlcNAc...) asparagine glycosylation is present at Asn-660. Residues Phe-663–Leu-682 form a helical; Voltage-sensor membrane-spanning segment. The Cytoplasmic segment spans residues Asn-683 to Gly-697. A helical transmembrane segment spans residues Asn-698 to Thr-720. Residues Lys-721–Asn-741 lie on the Extracellular side of the membrane. Asn-723 is a glycosylation site (N-linked (GlcNAc...) asparagine). The pore-forming intramembrane region spans Phe-742 to Trp-762. Residues Gly-763–Pro-772 lie on the Extracellular side of the membrane. Residues Cys-764 and Cys-774 are joined by a disulfide bond. A helical membrane pass occupies residues Leu-773–Leu-798. Residues Asn-799–Gln-1029 lie on the Cytoplasmic side of the membrane. Residues Asn-1022–Leu-1319 form an III repeat. Residues Ile-1030 to Ile-1052 traverse the membrane as a helical segment. Topologically, residues Phe-1053–Lys-1066 are extracellular. Residues Leu-1067–Phe-1092 traverse the membrane as a helical segment. At Arg-1093–Ser-1098 the chain is on the cytoplasmic side. Residues Ala-1099 to Met-1116 traverse the membrane as a helical segment. Residue Asn-1117 is a topological domain, extracellular. A helical; Voltage-sensor transmembrane segment spans residues Leu-1118–Phe-1139. At Glu-1140–Asn-1158 the chain is on the cytoplasmic side. A helical transmembrane segment spans residues Val-1159–Gly-1180. At Lys-1181–Val-1223 the chain is on the extracellular side. N-linked (GlcNAc...) asparagine glycosylation is found at Asn-1187, Asn-1202, Asn-1207, and Asn-1210. The segment at residues Gly-1224–Ala-1245 is an intramembrane region (pore-forming). Over Ala-1246–Asn-1261 the chain is Extracellular. The helical transmembrane segment at Leu-1262–Ile-1288 threads the bilayer. Residues Asp-1289–Asp-1341 are Cytoplasmic-facing. One copy of the IV repeat lies at Ile-1328–Gln-1619. Residues Leu-1342–Ala-1365 form a helical membrane-spanning segment. Residues Glu-1366 to Lys-1376 lie on the Extracellular side of the membrane. A helical transmembrane segment spans residues Thr-1377–Leu-1400. The Cytoplasmic portion of the chain corresponds to Arg-1401–Thr-1406. A helical transmembrane segment spans residues Asn-1407–Glu-1430. Topologically, residues Asp-1431–Leu-1440 are extracellular. Residues Phe-1441 to Arg-1463 traverse the membrane as a helical; Voltage-sensor segment. Over Thr-1464–Asn-1478 the chain is Cytoplasmic. The chain crosses the membrane as a helical span at residues Ile-1479–Val-1501. The Extracellular segment spans residues Lys-1502–Thr-1515. The pore-forming intramembrane region spans Phe-1516–Pro-1538. The Extracellular portion of the chain corresponds to Met-1539–Ile-1559. Residue Asn-1547 is glycosylated (N-linked (GlcNAc...) asparagine). A helical transmembrane segment spans residues Ala-1560–Leu-1584. Topologically, residues Glu-1585 to Asp-1765 are cytoplasmic.

The protein belongs to the sodium channel (TC 1.A.1.10) family. Nav1.9/SCN11A subfamily. The voltage-resistant sodium channel consists of an ion conducting pore forming alpha-subunit regulated by one or more auxiliary subunits SCN1B, SCN2B and SCN3B. Expressed (at protein level) in myenteric sensory neurons. Expressed in small sensory neurons of the dorsal root ganglia (C-fiber neurons) and trigeminal ganglia.

Its subcellular location is the cell membrane. It carries out the reaction Na(+)(in) = Na(+)(out). With respect to regulation, activity is not sensitive to inhibition by tetrodotoxin. Functionally, sodium channel mediating the voltage-dependent sodium ion permeability of excitable membranes. Assuming opened or closed conformations in response to the voltage difference across the membrane, the protein forms a sodium-selective channel through which sodium ions may pass in accordance with their electrochemical gradient. Involved in membrane depolarization during action potential in nociceptors which function as key relay stations for the electrical transmission of pain signals from the periphery to the central nervous system. Also involved in rapid BDNF-evoked neuronal depolarization. The protein is Sodium channel protein type 11 subunit alpha of Rattus norvegicus (Rat).